The following is a 124-amino-acid chain: MATINQLVRKPRVKKVVKSNVPALEACPQKRGVCTRVYTTTPKKPNSALRKVCRIRLTNGFEVTSYIGGEGHNLQEHSVVLIRGGRVKDLPGVRYHTVRGALDCAGVKDRKQGRSKYGVKRPKA.

Aspartate 89 is modified (3-methylthioaspartic acid).

The protein belongs to the universal ribosomal protein uS12 family. In terms of assembly, part of the 30S ribosomal subunit. Contacts proteins S8 and S17. May interact with IF1 in the 30S initiation complex.

Functionally, with S4 and S5 plays an important role in translational accuracy. Its function is as follows. Interacts with and stabilizes bases of the 16S rRNA that are involved in tRNA selection in the A site and with the mRNA backbone. Located at the interface of the 30S and 50S subunits, it traverses the body of the 30S subunit contacting proteins on the other side and probably holding the rRNA structure together. The combined cluster of proteins S8, S12 and S17 appears to hold together the shoulder and platform of the 30S subunit. This is Small ribosomal subunit protein uS12 (rpsL) from Mannheimia haemolytica (Pasteurella haemolytica).